The sequence spans 434 residues: Serine/threonine-protein kinase Sgk1-A (434 aa).

Residues 66–94 are disordered; the sequence is PQEPELLNENSSPPPSPSQQINLGPSSNP. Residues 84–94 show a composition bias toward polar residues; the sequence is QQINLGPSSNP. The Protein kinase domain maps to 101–358; sequence FQFLKIIGKG…FMEIKNHIFF (258 aa). ATP contacts are provided by residues 107 to 115 and Lys-130; that span reads IGKGSFGKV. The Proton acceptor role is filled by Asp-225. An AGC-kinase C-terminal domain is found at 359–434; that stretch reads SPINWDDLIN…SYAPPMESYL (76 aa).

It belongs to the protein kinase superfamily. AGC Ser/Thr protein kinase family.

The protein localises to the cytoplasm. It is found in the nucleus. It localises to the endoplasmic reticulum. The enzyme catalyses L-seryl-[protein] + ATP = O-phospho-L-seryl-[protein] + ADP + H(+). It carries out the reaction L-threonyl-[protein] + ATP = O-phospho-L-threonyl-[protein] + ADP + H(+). Protein kinase that may play an important role in cellular stress response. Plays an important role in activating certain potassium, sodium, and chloride channels, suggesting an involvement in the regulation of processes such as cell survival, neuronal excitability, and renal sodium excretion. The sequence is that of Serine/threonine-protein kinase Sgk1-A (sgk1-a) from Xenopus laevis (African clawed frog).